The sequence spans 849 residues: Putative pentatricopeptide repeat-containing protein At5g08490 (849 aa).

PPR repeat units lie at residues D20–A54, C55–V89, S121–K155, D156–K187, D188–P222, N223–Q260, H262–S296, W297–S327, D329–L363, D365–S399, W400–L430, D431–H465, E469–R499, T501–T531, D532–P566, N567–G597, D601–R631, D632–P666, D667–P702, and T703–E733. The segment at I738–D813 is type E motif. The interval G814 to K844 is type E(+) motif.

The protein belongs to the PPR family. PCMP-E subfamily.

The chain is Putative pentatricopeptide repeat-containing protein At5g08490 (PCMP-E32) from Arabidopsis thaliana (Mouse-ear cress).